We begin with the raw amino-acid sequence, 360 residues long: Protein phosphatase 1 regulatory subunit 7 (360 aa).

Positions 1 to 64 (MAAERGAGQQ…GEEDPEEEHE (64 aa)) are disordered. N-acetylalanine is present on Ala-2. A phosphoserine mark is found at Ser-12, Ser-24, Ser-27, Ser-44, and Ser-47. Over residues 17 to 34 (EVDRRVESEESGDEEGKK) the composition is skewed to basic and acidic residues. The span at 53–63 (ERGEEDPEEEH) shows a compositional bias: acidic residues. LRR repeat units lie at residues 77–98 (DAEDVDLNHYRIGKIEGFEVLK), 99–120 (KVKTLCLRQNLIKCIENLEELQ), 121–142 (SLRELDLYDNQIKKIENLEALT), 143–164 (ELEILDISFNLLRNIEGVDKVT), 165–186 (QLKKLFLVNNKISKIENLSNLH), 187–208 (QLQMLELGSNRIRAIENIDTLT), 209–230 (NLESLFLGKNKITKLQNLDALT), 231–252 (NLTVLSMQSNRLTKIEGLQNLV), 253–274 (NLQELYLSHNGIEVIEGLENNN), 275–296 (KLTMLDIASNRIKKIENISHLT), and 297–318 (EPQEFWMNDNLLESWSDLDELK). Residue Ser-322 is modified to Phosphoserine. One can recognise an LRRCT domain in the interval 331–360 (NPLQKDPQYRRKVMLALPSVRQIDATFVRF).

Belongs to the SDS22 family. As to quaternary structure, interacts with PPP1CA, PPP1CB and PPP1CC/PPP1G.

The protein localises to the nucleus. Functionally, regulatory subunit of protein phosphatase 1. The polypeptide is Protein phosphatase 1 regulatory subunit 7 (PPP1R7) (Pongo abelii (Sumatran orangutan)).